We begin with the raw amino-acid sequence, 178 residues long: NADPH azoreductase (178 aa).

Residue 106–111 coordinates NADP(+); it reads GGGKGG.

It belongs to the azoreductase type 2 family. As to quaternary structure, monomer.

It catalyses the reaction N,N-dimethyl-1,4-phenylenediamine + aniline + 2 NADP(+) = 4-(dimethylamino)azobenzene + 2 NADPH + 2 H(+). In terms of biological role, catalyzes the reductive cleavage of azo bond in aromatic azo compounds to the corresponding amines. Requires NADPH as an electron donor for its activity. Compounds with paired naphthalene groups coupled with the azo group are good substrates, with the following preference order: Rocceline &gt; Sumifix Black B &gt; Solar Orange. In Bacillus sp. (strain OY1-2), this protein is NADPH azoreductase (azr).